A 231-amino-acid polypeptide reads, in one-letter code: Hypoxanthine-guanine-xanthine phosphoribosyltransferase (231 aa).

Residues K77, 144–152 (EDIIDTGKT), K176, and D204 contribute to the GMP site. Catalysis depends on D148, which acts as the Proton acceptor. D204 provides a ligand contact to Mg(2+).

It belongs to the purine/pyrimidine phosphoribosyltransferase family. Homotetramer. Mg(2+) is required as a cofactor.

Its subcellular location is the cytoplasm. It catalyses the reaction IMP + diphosphate = hypoxanthine + 5-phospho-alpha-D-ribose 1-diphosphate. The catalysed reaction is GMP + diphosphate = guanine + 5-phospho-alpha-D-ribose 1-diphosphate. The enzyme catalyses XMP + diphosphate = xanthine + 5-phospho-alpha-D-ribose 1-diphosphate. The protein operates within purine metabolism; GMP biosynthesis via salvage pathway; GMP from guanine: step 1/1. It participates in purine metabolism; IMP biosynthesis via salvage pathway; IMP from hypoxanthine: step 1/1. It functions in the pathway purine metabolism; XMP biosynthesis via salvage pathway; XMP from xanthine: step 1/1. Functionally, catalyzes the transfer of a ribosyl phosphate group from 5-phosphoribose 1-diphosphate to the N(9) of hypoxanthine, guanine or xanthine, leading to IMP, GMP and XMP, respectively. Plays a central role in the generation of purine nucleotides through the purine salvage pathway. This chain is Hypoxanthine-guanine-xanthine phosphoribosyltransferase (LACZ), found in Plasmodium falciparum (isolate K1 / Thailand).